The sequence spans 476 residues: ATP synthase subunit beta (476 aa).

161 to 168 (GGAGVGKT) provides a ligand contact to ATP.

Belongs to the ATPase alpha/beta chains family. F-type ATPases have 2 components, CF(1) - the catalytic core - and CF(0) - the membrane proton channel. CF(1) has five subunits: alpha(3), beta(3), gamma(1), delta(1), epsilon(1). CF(0) has three main subunits: a(1), b(2) and c(9-12). The alpha and beta chains form an alternating ring which encloses part of the gamma chain. CF(1) is attached to CF(0) by a central stalk formed by the gamma and epsilon chains, while a peripheral stalk is formed by the delta and b chains.

It localises to the cell membrane. It carries out the reaction ATP + H2O + 4 H(+)(in) = ADP + phosphate + 5 H(+)(out). Produces ATP from ADP in the presence of a proton gradient across the membrane. The catalytic sites are hosted primarily by the beta subunits. The chain is ATP synthase subunit beta from Mycolicibacterium gilvum (strain PYR-GCK) (Mycobacterium gilvum (strain PYR-GCK)).